The following is a 196-amino-acid chain: Imidazoleglycerol-phosphate dehydratase (196 aa).

It belongs to the imidazoleglycerol-phosphate dehydratase family.

The protein resides in the cytoplasm. It carries out the reaction D-erythro-1-(imidazol-4-yl)glycerol 3-phosphate = 3-(imidazol-4-yl)-2-oxopropyl phosphate + H2O. Its pathway is amino-acid biosynthesis; L-histidine biosynthesis; L-histidine from 5-phospho-alpha-D-ribose 1-diphosphate: step 6/9. This chain is Imidazoleglycerol-phosphate dehydratase, found in Oleidesulfovibrio alaskensis (strain ATCC BAA-1058 / DSM 17464 / G20) (Desulfovibrio alaskensis).